Here is a 295-residue protein sequence, read N- to C-terminus: Probable protein phosphatase 2C 6 (295 aa).

The region spanning 23-294 (QYAATHMQGW…DNMTCILIQF (272 aa)) is the PPM-type phosphatase domain. Residues D57, G58, D237, and D285 each coordinate Mn(2+).

This sequence belongs to the PP2C family. Requires Mg(2+) as cofactor. Mn(2+) is required as a cofactor.

The protein resides in the membrane. The enzyme catalyses O-phospho-L-seryl-[protein] + H2O = L-seryl-[protein] + phosphate. The catalysed reaction is O-phospho-L-threonyl-[protein] + H2O = L-threonyl-[protein] + phosphate. In terms of biological role, enzyme with a broad specificity. The protein is Probable protein phosphatase 2C 6 of Paramecium tetraurelia.